The primary structure comprises 305 residues: Oxygen-dependent coproporphyrinogen-III oxidase (305 aa).

Serine 98 is a substrate binding site. The a divalent metal cation site is built by histidine 102 and histidine 112. The Proton donor role is filled by histidine 112. 114–116 contributes to the substrate binding site; the sequence is NVR. Residues histidine 151 and histidine 181 each coordinate a divalent metal cation. Positions 246–281 are important for dimerization; sequence YVEFNLVYDRGTLFGLQSGGRTESILMSMPPLARWE. Residue 264 to 266 participates in substrate binding; the sequence is GGR.

It belongs to the aerobic coproporphyrinogen-III oxidase family. As to quaternary structure, homodimer. A divalent metal cation is required as a cofactor.

Its subcellular location is the cytoplasm. The catalysed reaction is coproporphyrinogen III + O2 + 2 H(+) = protoporphyrinogen IX + 2 CO2 + 2 H2O. It participates in porphyrin-containing compound metabolism; protoporphyrin-IX biosynthesis; protoporphyrinogen-IX from coproporphyrinogen-III (O2 route): step 1/1. Involved in the heme biosynthesis. Catalyzes the aerobic oxidative decarboxylation of propionate groups of rings A and B of coproporphyrinogen-III to yield the vinyl groups in protoporphyrinogen-IX. This is Oxygen-dependent coproporphyrinogen-III oxidase from Vibrio vulnificus (strain CMCP6).